A 453-amino-acid chain; its full sequence is UDP-N-acetylmuramate--L-alanine ligase (453 aa).

112–118 (GTHGKTT) contributes to the ATP binding site.

The protein belongs to the MurCDEF family.

It is found in the cytoplasm. It catalyses the reaction UDP-N-acetyl-alpha-D-muramate + L-alanine + ATP = UDP-N-acetyl-alpha-D-muramoyl-L-alanine + ADP + phosphate + H(+). The protein operates within cell wall biogenesis; peptidoglycan biosynthesis. Cell wall formation. The sequence is that of UDP-N-acetylmuramate--L-alanine ligase from Lawsonia intracellularis (strain PHE/MN1-00).